The sequence spans 463 residues: Bifunctional protein HldE (463 aa).

The ribokinase stretch occupies residues 1–311; it reads MKQILVVGDL…EEIALILNQT (311 aa). 191 to 194 serves as a coordination point for ATP; sequence NRIE. Asp260 is a catalytic residue. The cytidylyltransferase stretch occupies residues 334–463; the sequence is FTNGCFDILH…IERIKRTCND (130 aa).

In the N-terminal section; belongs to the carbohydrate kinase PfkB family. It in the C-terminal section; belongs to the cytidylyltransferase family. As to quaternary structure, homodimer.

It catalyses the reaction D-glycero-beta-D-manno-heptose 7-phosphate + ATP = D-glycero-beta-D-manno-heptose 1,7-bisphosphate + ADP + H(+). The enzyme catalyses D-glycero-beta-D-manno-heptose 1-phosphate + ATP + H(+) = ADP-D-glycero-beta-D-manno-heptose + diphosphate. The protein operates within nucleotide-sugar biosynthesis; ADP-L-glycero-beta-D-manno-heptose biosynthesis; ADP-L-glycero-beta-D-manno-heptose from D-glycero-beta-D-manno-heptose 7-phosphate: step 1/4. It functions in the pathway nucleotide-sugar biosynthesis; ADP-L-glycero-beta-D-manno-heptose biosynthesis; ADP-L-glycero-beta-D-manno-heptose from D-glycero-beta-D-manno-heptose 7-phosphate: step 3/4. Functionally, catalyzes the phosphorylation of D-glycero-D-manno-heptose 7-phosphate at the C-1 position to selectively form D-glycero-beta-D-manno-heptose-1,7-bisphosphate. Catalyzes the ADP transfer from ATP to D-glycero-beta-D-manno-heptose 1-phosphate, yielding ADP-D-glycero-beta-D-manno-heptose. The polypeptide is Bifunctional protein HldE (Helicobacter pylori (strain Shi470)).